A 334-amino-acid chain; its full sequence is Tyrosine-protein kinase SRK3 (334 aa).

One can recognise an SH2 domain in the interval 1–42 (IRTLDDGGFYMANRISFPTLQNLVSHYMMDADGLAQRLSRPC). The 256-residue stretch at 66–321 (IQLQRKLGQG…LKNLLEDYYV (256 aa)) folds into the Protein kinase domain. ATP-binding positions include 72 to 80 (LGQGNFGEV) and lysine 94. Residue aspartate 186 is the Proton acceptor of the active site.

This sequence belongs to the protein kinase superfamily. Tyr protein kinase family.

It localises to the cytoplasm. It catalyses the reaction L-tyrosyl-[protein] + ATP = O-phospho-L-tyrosyl-[protein] + ADP + H(+). This Spongilla lacustris (Freshwater sponge) protein is Tyrosine-protein kinase SRK3 (SRK3).